Reading from the N-terminus, the 1159-residue chain is Ferroxidase HEPHL1 (1159 aa).

Positions 1–23 (MFLKQPGGCILLQFLGLLGLVGA) are cleaved as a signal peptide. Plastocyanin-like domains lie at 24–206 (VTRT…LLVC), 217–365 (MRTD…VGNC), 378–560 (QRRY…LLVC), 570–718 (TQKG…ISSC), 730–906 (MLRT…LITC), and 914–1092 (KGRR…VPSQ). Residues 24–1114 (VTRTYYIGIV…KNLRPRGAKA (1091 aa)) lie on the Extracellular side of the membrane. Cu cation is bound by residues H126 and H128. N-linked (GlcNAc...) asparagine glycosylation occurs at N160. C180 and C206 form a disulfide bridge. Residues H186 and H188 each coordinate Cu cation. An N-linked (GlcNAc...) asparagine glycan is attached at N235. C284 and C365 form a disulfide bridge. Residues H303, C346, and H351 each coordinate Cu cation. N-linked (GlcNAc...) asparagine glycosylation occurs at N406. Residues C534 and C560 are joined by a disulfide bond. The N-linked (GlcNAc...) asparagine glycan is linked to N588. C637 and C718 form a disulfide bridge. Cu cation contacts are provided by H656, C699, H704, and M709. N-linked (GlcNAc...) asparagine glycosylation is present at N771. C880 and C906 are joined by a disulfide. N-linked (GlcNAc...) asparagine glycosylation occurs at N934. H1002, H1005, H1007, H1047, C1048, H1049, H1053, and M1058 together coordinate Cu cation. A helical transmembrane segment spans residues 1115 to 1135 (ALVILFILGLLLLVATVVLAL). The Cytoplasmic portion of the chain corresponds to 1136 to 1159 (RLRSSRRQMAYREVQSCALPTDAL).

Belongs to the multicopper oxidase family. Cu cation serves as cofactor.

It localises to the membrane. The enzyme catalyses 4 Fe(2+) + O2 + 4 H(+) = 4 Fe(3+) + 2 H2O. Is a copper-binding glycoprotein with ferroxidase activity. It oxidizes Fe(2+) to Fe(3+) without releasing radical oxygen species. May be involved in the regulation of intracellular iron content. The polypeptide is Ferroxidase HEPHL1 (Hephl1) (Mus musculus (Mouse)).